The chain runs to 181 residues: Adenine phosphoribosyltransferase (181 aa).

This sequence belongs to the purine/pyrimidine phosphoribosyltransferase family. In terms of assembly, homodimer.

It localises to the cytoplasm. The enzyme catalyses AMP + diphosphate = 5-phospho-alpha-D-ribose 1-diphosphate + adenine. It functions in the pathway purine metabolism; AMP biosynthesis via salvage pathway; AMP from adenine: step 1/1. Catalyzes a salvage reaction resulting in the formation of AMP, that is energically less costly than de novo synthesis. This Aeromonas salmonicida (strain A449) protein is Adenine phosphoribosyltransferase.